The following is a 732-amino-acid chain: Eukaryotic translation initiation factor 3 subunit B (732 aa).

The sufficient for interaction with HCR1 and TIF32 stretch occupies residues Met-1–Ala-94. A sufficient for interaction with PIC8 region spans residues Met-1 to Phe-219. Residues Asn-37 to Asp-120 form the RRM domain. 4 WD repeats span residues Ala-185–Arg-224, Pro-237–Thr-280, Glu-439–Ala-481, and Val-507–Asn-554.

Belongs to the eIF-3 subunit B family. As to quaternary structure, component of the eukaryotic translation initiation factor 3 (eIF-3) complex.

It localises to the cytoplasm. RNA-binding component of the eukaryotic translation initiation factor 3 (eIF-3) complex, which is involved in protein synthesis of a specialized repertoire of mRNAs and, together with other initiation factors, stimulates binding of mRNA and methionyl-tRNAi to the 40S ribosome. The eIF-3 complex specifically targets and initiates translation of a subset of mRNAs involved in cell proliferation. The sequence is that of Eukaryotic translation initiation factor 3 subunit B from Kluyveromyces lactis (strain ATCC 8585 / CBS 2359 / DSM 70799 / NBRC 1267 / NRRL Y-1140 / WM37) (Yeast).